A 29-amino-acid polypeptide reads, in one-letter code: Snake venom metalloproteinase bothrolysin (29 aa).

One can recognise a Peptidase M12B domain in the interval arginine 6–isoleucine 29. Residue glutamate 9 coordinates Ca(2+).

Belongs to the venom metalloproteinase (M12B) family. Requires Zn(2+) as cofactor. In terms of tissue distribution, expressed by the venom gland.

Its subcellular location is the secreted. The catalysed reaction is Cleavage of 4-Gln-|-His-5, 9-Ser-|-His-10 and 14-Ala-|-Leu-15 of insulin B chain and Pro-|-Phe of angiotensin I.. Functionally, snake venom zinc metalloproteinase that impairs hemostasis in the envenomed animal. This is Snake venom metalloproteinase bothrolysin from Bothrops jararaca (Jararaca).